Reading from the N-terminus, the 1551-residue chain is MCSRGDANAAGAAAARRVTGLCYNMGLLIALALLCLFSLAEANSKAITTSLTTKWFSAPLLLEASEFLAEDSQEKFWSFVEASQNIGSSDQHDTDRSYYDAILEAAFRFLSPLQQNLLKFCLSLRSYSASIQAFQQIAVDEPPPEGCKSFLSVHGKQTCDLGTLESLLLTAPDRPKPLLFKGDHRYPSSNPESPVVIFYSEIGHEEFSNIHHQLISKSNEGKINYVFRHYISNPRKEPVHLSGYGVELAIKSTEYKAKDDTQVKGTEVNTTVIGENDPIDEVQGFLFGKLRELYPSLEGQLKEFRKHLVESTNEMAPLKVWQLQDLSFQTAARILAAPVELALVVMKDISQNFPTKARAITKTAVSAQLRAEVEENQKYFKGTIGLQPGDSALFINGLHIDLDTQDIFSLFDTLRNEARVMEGLHRLGIEGLSLHNILKLNIQPSETDYAVDIRSPAISWVNNLEVDSRYNSWPSSLQELLRPTFPGVIRQIRKNLHNMVFIVDPVHETTAELVSIAEMFLSNHIPLRIGFIFVVNDSEDVDGMQDAGVAVLRAYNYVGQEVDGYHAFQTLTQIYNKVRTGEKVKVEHVVSVLEKKYPYVEVNSILGIDSAYDQNRKEARGYYEQTGVGPLPVVLFNGMPFEKEQLDPDELETITMHKILETTTFFQRAVYLGELSHDQDVVEYIMNQPNVVPRINSRILTAKREYLDLTASNNFYVDDFARFSALDSRGKTAAIANSMNYLTKKGMSSKEIYDDSFIRPVTFWIVGDFDSPSGRQLLYDAIKHQKTSNNVRISMINNPSREISDSSTPVSRAIWAALQTQTSNSAKNFITKMVKEETAEALAAGVDIGEFSVGGMDVSLFKEVFESSRMDFILSHALYCRDVLKLKKGQRVVISNGRIIGPLEDSELFNQDDFHLLENIILKTSGQKIKSHIQQLRVEEDVASDLVMKVDALLSAQPKGEARIEYQFFEDKHSAIKLKPKEGETYYDVVAVVDPVTREAQRLAPLLLVLAQLINMSLRVFMNCQSKLSDMPLKSFYRYVLEPEISFTADNSFAKGPIAKFLDMPQSPLFTLNLNTPESWMVESVRTPYDLDNIYLEEVDSIVAAEYELEYLLLEGHCYDITTGQPPRGLQFTLGTSANPTTVDTIVMANLGYFQLKANPGAWILRLRKGRSDDIYRIYSHDGTDSPPDANDVVVILNNFKSKIIKVKVQKKADMANEDLLSDGTNENESGFWDSFKWGFSGQKTEEVKQDKDDIINIFSVASGHLYERFLRIMMLSVLKNTKTPVKFWFLKNYLSPTFKEFIPYMAKKYNFQYELVQYKWPRWLHQQTEKQRIIWGYKILFLDVLFPLVVDKFLFVDADQIVRTDLKELRDFNLDGAPYGYTPFCDSRREMDGYRFWKSGYWASHLAGRKYHISALYVVDLKKFRKIAAGDRLRGQYQGLSQDPNSLSNLDQDLPNNMIHQVPIKSLPQEWLWCETWCDDASKKRAKTIDLCNNPMTKEPKLEAAVRIVPEWQDYDQEIKQLQTLFQEEKELGTLHEEETQEGSQKHEEL.

The signal sequence occupies residues 1 to 42; sequence MCSRGDANAAGAAAARRVTGLCYNMGLLIALALLCLFSLAEA. 4 N-linked (GlcNAc...) asparagine glycosylation sites follow: asparagine 269, asparagine 536, asparagine 1015, and asparagine 1228. The interval 1244–1551 is glucosyltransferase; that stretch reads KTEEVKQDKD…QEGSQKHEEL (308 aa). Serine 1277 bears the Phosphoserine mark. The tract at residues 1531 to 1551 is disordered; sequence KELGTLHEEETQEGSQKHEEL. Residues 1548-1551 carry the Prevents secretion from ER motif; the sequence is HEEL.

This sequence belongs to the glycosyltransferase 8 family. Monomer as well as in a tight complex with SELENOF. Interacts with METTL23. Part of a large chaperone multiprotein complex comprising DNAJB11, HSP90B1, HSPA5, HYOU, PDIA2, PDIA4, PDIA6, PPIB, SDF2L1, UGGT1 and very small amounts of ERP29, but not, or at very low levels, CALR nor CANX. The cofactor is Ca(2+).

It is found in the endoplasmic reticulum lumen. The protein resides in the endoplasmic reticulum-Golgi intermediate compartment. The enzyme catalyses N(4)-(alpha-D-Man-(1-&gt;2)-alpha-D-Man-(1-&gt;2)-alpha-D-Man-(1-&gt;3)-[alpha-D-Man-(1-&gt;2)-alpha-D-Man-(1-&gt;3)-[alpha-D-Man-(1-&gt;2)-alpha-D-Man-(1-&gt;6)]-alpha-D-Man-(1-&gt;6)]-beta-D-Man-(1-&gt;4)-beta-D-GlcNAc-(1-&gt;4)-beta-D-GlcNAc)-L-asparaginyl-[protein] (N-glucan mannose isomer 9A1,2,3B1,2,3) + UDP-alpha-D-glucose = N(4)-(alpha-D-Glc-(1-&gt;3)-alpha-D-Man-(1-&gt;2)-alpha-D-Man-(1-&gt;2)-alpha-D-Man-(1-&gt;3)-[alpha-D-Man-(1-&gt;2)-alpha-D-Man-(1-&gt;3)-[alpha-D-Man-(1-&gt;2)-alpha-D-Man-(1-&gt;6)]-alpha-D-Man-(1-&gt;6)]-beta-D-Man-(1-&gt;4)-beta-D-GlcNAc-(1-&gt;4)-beta-D-GlcNAc)-L-asparaginyl-[protein] + UDP + H(+). It functions in the pathway protein modification; protein glycosylation. In terms of biological role, recognizes glycoproteins with minor folding defects. Reglucosylates single N-glycans near the misfolded part of the protein, thus providing quality control for protein folding in the endoplasmic reticulum. Reglucosylated proteins are recognized by calreticulin for recycling to the endoplasmic reticulum and refolding or degradation. This chain is UDP-glucose:glycoprotein glucosyltransferase 1 (Uggt1), found in Rattus norvegicus (Rat).